A 201-amino-acid chain; its full sequence is MRSGEGSTAAAAAAEEEKVKVAAPFRLAELGLRVCAVPLAVASVWEMATNKQVDETYGEVRFSDLSGFRYLVWINAITAAYSVASILLSSCRFITRFDWLIFILDQASAYLLLTSASAAAEVVYLAREGDREVSWGEVCSYFGRFCGAATVSVALNAAALLCFMALSLISAFRVFTKFNPPSQSNSKQQLSQEQGKPVVSG.

Over 1–26 the chain is Cytoplasmic; that stretch reads MRSGEGSTAAAAAAEEEKVKVAAPFR. Residues 27 to 47 traverse the membrane as a helical segment; the sequence is LAELGLRVCAVPLAVASVWEM. Over 48–70 the chain is Extracellular; that stretch reads ATNKQVDETYGEVRFSDLSGFRY. Residues 71–91 traverse the membrane as a helical segment; the sequence is LVWINAITAAYSVASILLSSC. The Cytoplasmic segment spans residues 92-98; it reads RFITRFD. Residues 99 to 119 form a helical membrane-spanning segment; sequence WLIFILDQASAYLLLTSASAA. Topologically, residues 120–148 are extracellular; sequence AEVVYLAREGDREVSWGEVCSYFGRFCGA. The helical transmembrane segment at 149-169 threads the bilayer; the sequence is ATVSVALNAAALLCFMALSLI. Residues 170 to 201 are Cytoplasmic-facing; that stretch reads SAFRVFTKFNPPSQSNSKQQLSQEQGKPVVSG. Residues 180-194 are compositionally biased toward polar residues; that stretch reads PPSQSNSKQQLSQEQ. The tract at residues 180 to 201 is disordered; the sequence is PPSQSNSKQQLSQEQGKPVVSG.

It belongs to the Casparian strip membrane proteins (CASP) family. As to quaternary structure, homodimer and heterodimers.

It is found in the cell membrane. In Oryza sativa subsp. indica (Rice), this protein is CASP-like protein 2D1.